Here is a 337-residue protein sequence, read N- to C-terminus: MSRELMVQDSGDTIGNTPLVLLRNISKGLDARIAVKVEYLNPSCSVKDRIAKSMVDEAEKAGTIVPGKTVLVEGTSGNLGIALAHIGKIRGYKVILVMPATMSVERRAMLRAYGAEVILSDPAEGHPGVIKKVEMLVDKLPNAHCLDQFSNPANPAAHYRTTGPEIWRQTEGKVDIVCFGVGSSGTVTGVGRYLREQNPNIEIYPVEPYESSVLSGLPRGPHKIQGIGAGIVPGNVDRSLFTEILRIKSDDAMQMARRLADEEAILGGISSGANVVAAVELASRPENKGKLIVTTVNSFAERYFTTELYSDVLNEVSQLTFSSDDEAMGIAKKYLGL.

K47 carries the post-translational modification N6-(pyridoxal phosphate)lysine. Pyridoxal 5'-phosphate is bound by residues N78, 182–186 (GSSGT), and S270.

The protein belongs to the cysteine synthase/cystathionine beta-synthase family. Homodimer. Pyridoxal 5'-phosphate is required as a cofactor.

The enzyme catalyses O-acetyl-L-serine + hydrogen sulfide = L-cysteine + acetate. It functions in the pathway amino-acid biosynthesis; L-cysteine biosynthesis; L-cysteine from L-serine: step 2/2. Functionally, primarily catalyzes the formation of cysteine and acetate from O-acetylserine and hydrogen sulfide. Can also catalyze the formation of cysteine and acetate from S-sulfocysteine and hydrogen sulfide and the formation of cyanoalanine and hydrogen sulfide from either S-sulfocysteine or O-acetylserine and hydrogen cyanide. The sequence is that of Cysteine synthase 3 from Caenorhabditis elegans.